Consider the following 309-residue polypeptide: Protease HtpX homolog (309 aa).

Transmembrane regions (helical) follow at residues Asn15–Ile35 and Ile54–Ile74. A Zn(2+)-binding site is contributed by His165. The active site involves Glu166. Residue His169 coordinates Zn(2+). Helical transmembrane passes span Val181–Gly201 and Met213–Leu233. Glu238 is a binding site for Zn(2+).

Belongs to the peptidase M48B family. It depends on Zn(2+) as a cofactor.

The protein localises to the cell inner membrane. In Helicobacter acinonychis (strain Sheeba), this protein is Protease HtpX homolog.